The following is a 1342-amino-acid chain: DNA-directed RNA polymerase subunit beta (1342 aa).

Belongs to the RNA polymerase beta chain family. The RNAP catalytic core consists of 2 alpha, 1 beta, 1 beta' and 1 omega subunit. When a sigma factor is associated with the core the holoenzyme is formed, which can initiate transcription.

The catalysed reaction is RNA(n) + a ribonucleoside 5'-triphosphate = RNA(n+1) + diphosphate. In terms of biological role, DNA-dependent RNA polymerase catalyzes the transcription of DNA into RNA using the four ribonucleoside triphosphates as substrates. The protein is DNA-directed RNA polymerase subunit beta of Blochmanniella floridana.